Here is a 312-residue protein sequence, read N- to C-terminus: Zinc finger CCCH domain-containing protein 25 (312 aa).

In terms of domain architecture, RRM spans 36–114 (AYVFVGGIPY…RIVRVDHVSK (79 aa)). The segment at 130–157 (REARGVCYAFQKGECNRGASCRYSHDEQ) adopts a C3H1-type zinc-finger fold. The segment at 153-312 (SHDEQRNANT…DSERYRKSRR (160 aa)) is disordered. 3 stretches are compositionally biased toward basic and acidic residues: residues 166–184 (SKEE…EPPM), 197–210 (RFPD…KSTG), and 219–312 (EAYK…KSRR).

The chain is Zinc finger CCCH domain-containing protein 25 from Oryza sativa subsp. japonica (Rice).